The primary structure comprises 1016 residues: Protein kinase C-like 2 (1016 aa).

The region spanning Met1–Gly68 is the REM-1 1 domain. Residues Gly68–Ser101 form a disordered region. Over residues Ser86–Ser101 the composition is skewed to low complexity. One can recognise an REM-1 2 domain in the interval Asn111 to Glu188. The region spanning Pro195–Glu307 is the C2 domain. Phorbol-ester/DAG-type zinc fingers lie at residues Gly405–Cys453 and Pro473–Cys523. The interval Tyr543–Ala602 is disordered. A compositionally biased stretch (basic residues) spans Gln546–Ser568. Low complexity predominate over residues Ser579–Pro590. One can recognise a Protein kinase domain in the interval Phe683 to Phe942. ATP-binding positions include Leu689–Val697 and Lys712. The active-site Proton acceptor is Asp808. The AGC-kinase C-terminal domain occupies Ser943–Thr1013. Thr984 bears the Phosphothreonine mark.

This sequence belongs to the protein kinase superfamily. AGC Ser/Thr protein kinase family. PKC subfamily. In terms of assembly, interacts with rho2.

It catalyses the reaction L-seryl-[protein] + ATP = O-phospho-L-seryl-[protein] + ADP + H(+). It carries out the reaction L-threonyl-[protein] + ATP = O-phospho-L-threonyl-[protein] + ADP + H(+). In terms of biological role, involved in the control of the cell shape. Target of the inhibitor staurosporine. The polypeptide is Protein kinase C-like 2 (pck2) (Schizosaccharomyces pombe (strain 972 / ATCC 24843) (Fission yeast)).